Here is a 178-residue protein sequence, read N- to C-terminus: Large ribosomal subunit protein bL25 (178 aa).

It belongs to the bacterial ribosomal protein bL25 family. CTC subfamily. Part of the 50S ribosomal subunit; part of the 5S rRNA/L5/L18/L25 subcomplex. Contacts the 5S rRNA. Binds to the 5S rRNA independently of L5 and L18.

Its function is as follows. This is one of the proteins that binds to the 5S RNA in the ribosome where it forms part of the central protuberance. The polypeptide is Large ribosomal subunit protein bL25 (Helicobacter pylori (strain Shi470)).